Here is a 171-residue protein sequence, read N- to C-terminus: ATP synthase subunit b (171 aa).

A helical transmembrane segment spans residues 2 to 22 (FLVKMVLGFLIFLSPLCATGL).

It belongs to the ATPase B chain family. F-type ATPases have 2 components, F(1) - the catalytic core - and F(0) - the membrane proton channel. F(1) has five subunits: alpha(3), beta(3), gamma(1), delta(1), epsilon(1). F(0) has three main subunits: a(1), b(2) and c(10-14). The alpha and beta chains form an alternating ring which encloses part of the gamma chain. F(1) is attached to F(0) by a central stalk formed by the gamma and epsilon chains, while a peripheral stalk is formed by the delta and b chains.

The protein resides in the cell inner membrane. Its function is as follows. F(1)F(0) ATP synthase produces ATP from ADP in the presence of a proton or sodium gradient. F-type ATPases consist of two structural domains, F(1) containing the extramembraneous catalytic core and F(0) containing the membrane proton channel, linked together by a central stalk and a peripheral stalk. During catalysis, ATP synthesis in the catalytic domain of F(1) is coupled via a rotary mechanism of the central stalk subunits to proton translocation. Functionally, component of the F(0) channel, it forms part of the peripheral stalk, linking F(1) to F(0). This is ATP synthase subunit b from Helicobacter pylori (strain Shi470).